The chain runs to 225 residues: Ferric nitrobindin-like protein (225 aa).

The GXWXGXG signature appears at 78-84 (GVWRGTG).

Belongs to the nitrobindin family.

The polypeptide is Ferric nitrobindin-like protein (Corynebacterium diphtheriae (strain ATCC 700971 / NCTC 13129 / Biotype gravis)).